A 445-amino-acid chain; its full sequence is 6-phosphogluconate dehydrogenase, decarboxylating (445 aa).

NADP(+)-binding positions include 1–4 (AVMG), 22–24 (NRS), 63–65 (VKA), and asparagine 91. Substrate-binding positions include asparagine 91 and 117–119 (SGG). Lysine 172 serves as the catalytic Proton acceptor. Residue 175-176 (HN) coordinates substrate. The active-site Proton donor is glutamate 179. Positions 180, 249, 276, 434, and 440 each coordinate substrate.

Belongs to the 6-phosphogluconate dehydrogenase family. Homodimer.

It carries out the reaction 6-phospho-D-gluconate + NADP(+) = D-ribulose 5-phosphate + CO2 + NADPH. It functions in the pathway carbohydrate degradation; pentose phosphate pathway; D-ribulose 5-phosphate from D-glucose 6-phosphate (oxidative stage): step 3/3. Its function is as follows. Catalyzes the oxidative decarboxylation of 6-phosphogluconate to ribulose 5-phosphate and CO(2), with concomitant reduction of NADP to NADPH. This Raoultella terrigena (Klebsiella terrigena) protein is 6-phosphogluconate dehydrogenase, decarboxylating (gnd).